Consider the following 240-residue polypeptide: tRNA (guanine-N(1)-)-methyltransferase (240 aa).

Residues Gly-112 and 132 to 137 (LGDFVL) contribute to the S-adenosyl-L-methionine site.

It belongs to the RNA methyltransferase TrmD family. In terms of assembly, homodimer.

The protein localises to the cytoplasm. It catalyses the reaction guanosine(37) in tRNA + S-adenosyl-L-methionine = N(1)-methylguanosine(37) in tRNA + S-adenosyl-L-homocysteine + H(+). Its function is as follows. Specifically methylates guanosine-37 in various tRNAs. In Cyanothece sp. (strain PCC 7425 / ATCC 29141), this protein is tRNA (guanine-N(1)-)-methyltransferase.